The chain runs to 309 residues: Cilia-and flagella-associated protein 96 (309 aa).

The segment at 220–249 (EEKKKTISNTFKPSSPGKKPGGMKAGTFDP) is disordered.

It belongs to the CFAP96 family. In terms of tissue distribution, detected in testis and fetal liver.

The protein localises to the cytoplasm. It is found in the cytoskeleton. The protein resides in the microtubule organizing center. It localises to the centrosome. This Homo sapiens (Human) protein is Cilia-and flagella-associated protein 96.